The primary structure comprises 405 residues: Deoxyguanosinetriphosphate triphosphohydrolase-like protein (405 aa).

The 145-residue stretch at 75–219 folds into the HD domain; the sequence is RLTHTIEVAQ…AAVADDIAYN (145 aa).

It belongs to the dGTPase family. Type 2 subfamily.

This is Deoxyguanosinetriphosphate triphosphohydrolase-like protein from Allorhizobium ampelinum (strain ATCC BAA-846 / DSM 112012 / S4) (Agrobacterium vitis (strain S4)).